The chain runs to 164 residues: Anterior gradient protein 2 (164 aa).

The first 20 residues, 1-20 (METVLKTLFVLLVATSLTLA), serve as a signal peptide directing secretion. 2 consecutive short sequence motifs (homodimer stabilization; interchain) follow at residues 34–43 (SRGWGDNLEW) and 49–56 (EGLYKAKT).

This sequence belongs to the AGR family. Monomer and homodimer.

Its subcellular location is the secreted. It is found in the endoplasmic reticulum. This chain is Anterior gradient protein 2, found in Xenopus tropicalis (Western clawed frog).